The primary structure comprises 481 residues: Aspartyl/glutamyl-tRNA(Asn/Gln) amidotransferase subunit B (481 aa).

The protein belongs to the GatB/GatE family. GatB subfamily. Heterotrimer of A, B and C subunits.

It catalyses the reaction L-glutamyl-tRNA(Gln) + L-glutamine + ATP + H2O = L-glutaminyl-tRNA(Gln) + L-glutamate + ADP + phosphate + H(+). The enzyme catalyses L-aspartyl-tRNA(Asn) + L-glutamine + ATP + H2O = L-asparaginyl-tRNA(Asn) + L-glutamate + ADP + phosphate + 2 H(+). In terms of biological role, allows the formation of correctly charged Asn-tRNA(Asn) or Gln-tRNA(Gln) through the transamidation of misacylated Asp-tRNA(Asn) or Glu-tRNA(Gln) in organisms which lack either or both of asparaginyl-tRNA or glutaminyl-tRNA synthetases. The reaction takes place in the presence of glutamine and ATP through an activated phospho-Asp-tRNA(Asn) or phospho-Glu-tRNA(Gln). The polypeptide is Aspartyl/glutamyl-tRNA(Asn/Gln) amidotransferase subunit B (Pseudomonas paraeruginosa (strain DSM 24068 / PA7) (Pseudomonas aeruginosa (strain PA7))).